Reading from the N-terminus, the 846-residue chain is Neurofilament medium polypeptide (846 aa).

Over residues 1-10 (MSYTLDSLGN) the composition is skewed to polar residues. Positions 1-52 (MSYTLDSLGNPSAYRRVPTETRSSFSRVSGSPSSGFRSQSWSRGSPSTVSSS) are disordered. An N-acetylserine modification is found at Ser2. The head stretch occupies residues 2 to 104 (SYTLDSLGNP…LSRSNEKEQL (103 aa)). Low complexity predominate over residues 22–45 (RSSFSRVSGSPSSGFRSQSWSRGS). Ser31 carries the post-translational modification Phosphoserine. An Omega-N-methylarginine modification is found at Arg43. An O-linked (GlcNAc) threonine glycan is attached at Thr48. At Ser98 the chain carries Phosphoserine. Residues 100–411 (EKEQLQGLND…KLLEGEETRF (312 aa)) form the IF rod domain. The coil 1A stretch occupies residues 104-135 (LQGLNDRFAGYIEKVHYLEQQNKEIEAEIHAL). Residues 136–148 (RQKQASHAQLGDA) are linker 1. The coil 1B stretch occupies residues 149–247 (YDQEIRELRA…EEEVADLLAQ (99 aa)). Ser225 carries the post-translational modification Phosphoserine. The segment at 248-264 (IQASHITVERKDYLKTD) is linker 12. Residues 265-286 (ISTALKEIRSQLECHSDQNMHQ) are coil 2A. Residues 287 to 290 (AEEW) are linker 2. The segment at 291-411 (FKCRYAKLTE…KLLEGEETRF (121 aa)) is coil 2B. At Tyr319 the chain carries Phosphotyrosine. Ser345, Ser417, and Ser429 each carry phosphoserine. Residues 412–845 (STFSGSITGP…HAIVKEVTQG (434 aa)) are tail. Residue Thr431 is glycosylated (O-linked (GlcNAc) threonine). Residues Ser467 and Ser483 each carry the phosphoserine modification. A disordered region spans residues 483–783 (SAKEEKEEAE…GEDRSDDKVV (301 aa)). The segment covering 489-499 (EEAEEKEEEPE) has biased composition (acidic residues). The segment covering 500–510 (VEKSPVKSPEA) has biased composition (basic and acidic residues). Phosphoserine is present on residues Ser503 and Ser507. Positions 511-533 (KEEEEGEKEEEEEGQEEEEEEDE) are enriched in acidic residues. Over residues 534-553 (GVKSDQAEEGGSEKEGSSEK) the composition is skewed to basic and acidic residues. Ser537, Ser545, Ser550, and Ser551 each carry phosphoserine. Residues 554 to 575 (DEGEQEEEGETEAEGEGEEAEA) are compositionally biased toward acidic residues. Thr564 bears the Phosphothreonine mark. The segment covering 576–603 (KEEKKTEGKVEEMAIKEEIKVEKPEKAK) has biased composition (basic and acidic residues). Residues Ser604, Ser609, Ser643, Ser667, Ser687, Ser713, Ser721, Ser751, and Ser767 each carry the phosphoserine modification. 2 stretches are compositionally biased toward basic and acidic residues: residues 610–675 (PVEE…KAVE) and 687–709 (SLEKDTKEEKPQQQEKVKEKAEE). 2 stretches are compositionally biased toward basic and acidic residues: residues 718–730 (GDKSPQESKKEDI) and 746–758 (TQEKGSGQEEEKG). Basic and acidic residues predominate over residues 769-783 (AEEKKGEDRSDDKVV).

This sequence belongs to the intermediate filament family. In terms of assembly, forms heterodimers with NEFL; which can further hetero-oligomerize (in vitro). Forms heterodimers with INA (in vitro). There are a number of repeats of the tripeptide K-S-P, NFM is phosphorylated on a number of the serines in this motif. It is thought that phosphorylation of NFM results in the formation of interfilament cross bridges that are important in the maintenance of axonal caliber. In terms of processing, phosphorylation seems to play a major role in the functioning of the larger neurofilament polypeptides (NF-M and NF-H), the levels of phosphorylation being altered developmentally and coincidentally with a change in the neurofilament function. Post-translationally, phosphorylated in the head and rod regions by the PKC kinase PKN1, leading to the inhibition of polymerization. As to expression, expressed in the dorsal root ganglion neurons (at protein level).

It localises to the cytoplasm. The protein resides in the cytoskeleton. Its subcellular location is the cell projection. It is found in the axon. Its function is as follows. Neurofilaments usually contain three intermediate filament proteins: NEFL, NEFM, and NEFH which are involved in the maintenance of neuronal caliber. May additionally cooperate with the neuronal intermediate filament proteins PRPH and INA to form neuronal filamentous networks. In Rattus norvegicus (Rat), this protein is Neurofilament medium polypeptide (Nefm).